Reading from the N-terminus, the 519-residue chain is ATP synthase subunit alpha (519 aa).

174 to 181 (GDRQTGKT) is an ATP binding site.

It belongs to the ATPase alpha/beta chains family. As to quaternary structure, F-type ATPases have 2 components, CF(1) - the catalytic core - and CF(0) - the membrane proton channel. CF(1) has five subunits: alpha(3), beta(3), gamma(1), delta(1), epsilon(1). CF(0) has three main subunits: a(1), b(2) and c(9-12). The alpha and beta chains form an alternating ring which encloses part of the gamma chain. CF(1) is attached to CF(0) by a central stalk formed by the gamma and epsilon chains, while a peripheral stalk is formed by the delta and b chains.

It localises to the cell inner membrane. It carries out the reaction ATP + H2O + 4 H(+)(in) = ADP + phosphate + 5 H(+)(out). Produces ATP from ADP in the presence of a proton gradient across the membrane. The alpha chain is a regulatory subunit. This Paracidovorax citrulli (strain AAC00-1) (Acidovorax citrulli) protein is ATP synthase subunit alpha.